Consider the following 288-residue polypeptide: ATP synthase subunit a (288 aa).

A run of 6 helical transmembrane segments spans residues 47–67, 104–124, 157–177, 199–219, 237–257, and 258–278; these read LDSM…FWMV, LIAP…LMDL, DPNI…FYSI, PIVQ…TLIA, LIFI…SVPW, and AIFH…LTIV.

The protein belongs to the ATPase A chain family. F-type ATPases have 2 components, CF(1) - the catalytic core - and CF(0) - the membrane proton channel. CF(1) has five subunits: alpha(3), beta(3), gamma(1), delta(1), epsilon(1). CF(0) has three main subunits: a(1), b(2) and c(9-12). The alpha and beta chains form an alternating ring which encloses part of the gamma chain. CF(1) is attached to CF(0) by a central stalk formed by the gamma and epsilon chains, while a peripheral stalk is formed by the delta and b chains.

It is found in the cell inner membrane. Functionally, key component of the proton channel; it plays a direct role in the translocation of protons across the membrane. This Psychrobacter arcticus (strain DSM 17307 / VKM B-2377 / 273-4) protein is ATP synthase subunit a.